Here is a 249-residue protein sequence, read N- to C-terminus: Molybdate/tungstate transport system permease protein WtpB (249 aa).

Residues 1–10 (MDRRDYLAYA) are Cytoplasmic-facing. The helical transmembrane segment at 11 to 31 (FAGLGAFLVAFIGLPLFMIFI) threads the bilayer. The Extracellular portion of the chain corresponds to 32–56 (KQAYDLEALQRTLVDPLVIESIRNS). Positions 53–239 (IRNSLFTATV…TISLAVFIFL (187 aa)) constitute an ABC transmembrane type-1 domain. A helical transmembrane segment spans residues 57 to 77 (LFTATVSTLLGILFGVPLGYV). Residues 78 to 96 (LARKEFKGKNFVQALIDTP) lie on the Cytoplasmic side of the membrane. A helical transmembrane segment spans residues 97 to 117 (IVIPHSVVGIMLLVTFSDAIL). A topological domain (extracellular) is located at residue Asp-118. A helical membrane pass occupies residues 119–139 (NYKGIVAVMLFVSSPFIVNSA). Over 140-179 (RDGFLSVDEKLEYVARTLGASGLRTFFSVTLPNAIHSIAS) the chain is Cytoplasmic. Residues 180-200 (GAIMAWARAISEVGAILIVAY) form a helical membrane-spanning segment. The Extracellular segment spans residues 201–223 (YPKTAQVLIMEYFNNYGLRASRP). A helical transmembrane segment spans residues 224 to 244 (IAVILVTISLAVFIFLRWLVG). The Cytoplasmic portion of the chain corresponds to 245-249 (RGRNA).

Belongs to the binding-protein-dependent transport system permease family. In terms of assembly, the complex is composed of two ATP-binding proteins (WtpC), two transmembrane proteins (WtpB) and a solute-binding protein (WtpA).

Its subcellular location is the cell membrane. Part of the ABC transporter complex WtpABC involved in molybdate/tungstate import. Probably responsible for the translocation of the substrate across the membrane. The sequence is that of Molybdate/tungstate transport system permease protein WtpB from Pyrococcus furiosus (strain ATCC 43587 / DSM 3638 / JCM 8422 / Vc1).